We begin with the raw amino-acid sequence, 380 residues long: DNA replication and repair protein RecF (380 aa).

Residue 30–37 (GNNAQGKS) coordinates ATP.

The protein belongs to the RecF family.

The protein localises to the cytoplasm. Its function is as follows. The RecF protein is involved in DNA metabolism; it is required for DNA replication and normal SOS inducibility. RecF binds preferentially to single-stranded, linear DNA. It also seems to bind ATP. The chain is DNA replication and repair protein RecF from Crocosphaera subtropica (strain ATCC 51142 / BH68) (Cyanothece sp. (strain ATCC 51142)).